The following is a 156-amino-acid chain: Small ribosomal subunit protein uS7 (156 aa).

This sequence belongs to the universal ribosomal protein uS7 family. Part of the 30S ribosomal subunit. Contacts proteins S9 and S11.

One of the primary rRNA binding proteins, it binds directly to 16S rRNA where it nucleates assembly of the head domain of the 30S subunit. Is located at the subunit interface close to the decoding center, probably blocks exit of the E-site tRNA. The polypeptide is Small ribosomal subunit protein uS7 (Latilactobacillus sakei subsp. sakei (strain 23K) (Lactobacillus sakei subsp. sakei)).